Here is a 23-residue protein sequence, read N- to C-terminus: Basic phospholipase A2 homolog CTs-K49c (23 aa).

In terms of processing, contains 7 disulfide bonds. Expressed by the venom gland.

It is found in the secreted. Its function is as follows. Snake venom phospholipase A2 homolog that lacks catalytic activity. Shows myotoxic activities. Induces local edema a few hours after injection (5-10 ug) in the hind paw. The chain is Basic phospholipase A2 homolog CTs-K49c from Trimeresurus stejnegeri (Chinese green tree viper).